A 180-amino-acid chain; its full sequence is NAD(P)H-quinone oxidoreductase subunit I, chloroplastic (180 aa).

4Fe-4S ferredoxin-type domains are found at residues 55–84 (GRIH…VHWR) and 95–124 (LNYS…MTEE). [4Fe-4S] cluster is bound by residues Cys-64, Cys-67, Cys-70, Cys-74, Cys-104, Cys-107, Cys-110, and Cys-114.

The protein belongs to the complex I 23 kDa subunit family. NDH is composed of at least 16 different subunits, 5 of which are encoded in the nucleus. [4Fe-4S] cluster is required as a cofactor.

It is found in the plastid. The protein resides in the chloroplast thylakoid membrane. It catalyses the reaction a plastoquinone + NADH + (n+1) H(+)(in) = a plastoquinol + NAD(+) + n H(+)(out). It carries out the reaction a plastoquinone + NADPH + (n+1) H(+)(in) = a plastoquinol + NADP(+) + n H(+)(out). Its function is as follows. NDH shuttles electrons from NAD(P)H:plastoquinone, via FMN and iron-sulfur (Fe-S) centers, to quinones in the photosynthetic chain and possibly in a chloroplast respiratory chain. The immediate electron acceptor for the enzyme in this species is believed to be plastoquinone. Couples the redox reaction to proton translocation, and thus conserves the redox energy in a proton gradient. The protein is NAD(P)H-quinone oxidoreductase subunit I, chloroplastic of Calycanthus floridus var. glaucus (Eastern sweetshrub).